Consider the following 237-residue polypeptide: Uridylate kinase (237 aa).

12–15 (KLSG) contributes to the ATP binding site. The tract at residues 20–25 (GEDGLG) is involved in allosteric activation by GTP. Glycine 54 is a binding site for UMP. ATP-binding residues include glycine 55 and arginine 59. Residues aspartate 74 and 135–142 (TGNPFFTT) each bind UMP. Threonine 162, tyrosine 168, and aspartate 171 together coordinate ATP.

It belongs to the UMP kinase family. Homohexamer.

The protein resides in the cytoplasm. It catalyses the reaction UMP + ATP = UDP + ADP. Its pathway is pyrimidine metabolism; CTP biosynthesis via de novo pathway; UDP from UMP (UMPK route): step 1/1. Allosterically activated by GTP. Inhibited by UTP. Functionally, catalyzes the reversible phosphorylation of UMP to UDP. The chain is Uridylate kinase (pyrH) from Haemophilus influenzae (strain ATCC 51907 / DSM 11121 / KW20 / Rd).